The primary structure comprises 1058 residues: Structural maintenance of chromosomes protein 6A (1058 aa).

In terms of domain architecture, Zinc-hook spans 23–1049 (ILRIRLENFM…SMVKSHEKIK (1027 aa)). 50–57 (GQNGSGKS) provides a ligand contact to ATP. Residues 136–449 (KISSRKEELR…NDLKKHQTNK (314 aa)) adopt a coiled-coil conformation. Residues 450–633 (VTAFGGDKVI…PPRPRRPTRL (184 aa)) are flexible hinge. A coiled-coil region spans residues 634-927 (CASFDDQIKD…RNKDLLKREL (294 aa)).

It belongs to the SMC family. SMC6 subfamily. In terms of assembly, forms a heterodimer with SMC5. The SMC5-SMC6 complex is composed of the SMC5 and SMC6 heterodimer attached via their hinge domain and from the non-SMC subunit NSE4A or NSE4B. Expressed in seedlings, rosette leaves and floral buds.

The protein localises to the nucleus. The protein resides in the chromosome. Core component of the SMC5-SMC6 complex that promotes sister chromatid alignment after DNA damage and facilitates double-stranded DNA breaks (DSBs) repair via homologous recombination between sister chromatids. The chain is Structural maintenance of chromosomes protein 6A (SMC6A) from Arabidopsis thaliana (Mouse-ear cress).